The following is a 196-amino-acid chain: MADS-box transcription factor 32 (196 aa).

An MADS-box domain is found at 1–61 (MGRGRSEIKR…GKLYHFLSPT (61 aa)). One can recognise a K-box domain in the interval 85–175 (RQERRAELEK…CDKIAHAQTL (91 aa)).

Its subcellular location is the nucleus. In terms of biological role, probable transcription factor. This chain is MADS-box transcription factor 32 (MADS32), found in Oryza sativa subsp. japonica (Rice).